The following is a 491-amino-acid chain: Probable glycine dehydrogenase (decarboxylating) subunit 2 (491 aa).

N6-(pyridoxal phosphate)lysine is present on K273.

The protein belongs to the GcvP family. C-terminal subunit subfamily. The glycine cleavage system is composed of four proteins: P, T, L and H. In this organism, the P 'protein' is a heterodimer of two subunits. Pyridoxal 5'-phosphate serves as cofactor.

It catalyses the reaction N(6)-[(R)-lipoyl]-L-lysyl-[glycine-cleavage complex H protein] + glycine + H(+) = N(6)-[(R)-S(8)-aminomethyldihydrolipoyl]-L-lysyl-[glycine-cleavage complex H protein] + CO2. Functionally, the glycine cleavage system catalyzes the degradation of glycine. The P protein binds the alpha-amino group of glycine through its pyridoxal phosphate cofactor; CO(2) is released and the remaining methylamine moiety is then transferred to the lipoamide cofactor of the H protein. This Bacillus thuringiensis (strain Al Hakam) protein is Probable glycine dehydrogenase (decarboxylating) subunit 2.